A 231-amino-acid polypeptide reads, in one-letter code: uncharacterized protein (231 aa).

An NADP(+)-binding site is contributed by 10–34; sequence VVTGAGSGIGEAIATLLHEEGAKVV. Ser-140 serves as a coordination point for substrate. Residue Tyr-153 is the Proton acceptor of the active site.

It belongs to the short-chain dehydrogenases/reductases (SDR) family.

This is an uncharacterized protein from Staphylococcus aureus (strain MW2).